Here is a 258-residue protein sequence, read N- to C-terminus: MPVLAVIPARLGATRLPRKPLRLLGGEPIVVRVYQRVVQLGVADHCVVATDHPEVQEACARHGIPVVMTRADHPSGTDRVAEVAAQPEFSSFDVLLNVQGDEPFVSREALAGAVEIVTSGLAPIGTAAVPVSVDTLQRPDVVKVVCADDRRALYFSRAAIPFLRDASDAAVLAPLVRQHVGVYAYARQALQQWVSWPPHPLELIERLEQLRPLAHGLSIGVTTVAATEGGIDTEDDLVRANTHWDVLHAANSSAYRSA.

It belongs to the KdsB family.

It is found in the cytoplasm. It carries out the reaction 3-deoxy-alpha-D-manno-oct-2-ulosonate + CTP = CMP-3-deoxy-beta-D-manno-octulosonate + diphosphate. It participates in nucleotide-sugar biosynthesis; CMP-3-deoxy-D-manno-octulosonate biosynthesis; CMP-3-deoxy-D-manno-octulosonate from 3-deoxy-D-manno-octulosonate and CTP: step 1/1. Its pathway is bacterial outer membrane biogenesis; lipopolysaccharide biosynthesis. Its function is as follows. Activates KDO (a required 8-carbon sugar) for incorporation into bacterial lipopolysaccharide in Gram-negative bacteria. The protein is 3-deoxy-manno-octulosonate cytidylyltransferase of Gemmatimonas aurantiaca (strain DSM 14586 / JCM 11422 / NBRC 100505 / T-27).